The chain runs to 351 residues: Cyanide hydratase (351 aa).

The CN hydrolase domain maps to Y6–L285. The active-site Proton acceptor is the E46. Residue K128 is part of the active site. C163 functions as the Nucleophile in the catalytic mechanism.

It belongs to the carbon-nitrogen hydrolase superfamily. Nitrilase family. In terms of assembly, oligomer of dimers, forming left-handed helical fibers with a diameter of 13 nm but with lengths ranging from approximately 1 um at the leading edge of the peak to having approximately the same length and diameter at the trailing edge.

It catalyses the reaction formamide = hydrogen cyanide + H2O. Its function is as follows. Catalyzes the hydration of cyanide to formamide. Degradation of cyanide may be important for plant pathogenic fungi in infection of cyanogenic plants. The polypeptide is Cyanide hydratase (Neurospora crassa (strain ATCC 24698 / 74-OR23-1A / CBS 708.71 / DSM 1257 / FGSC 987)).